Here is a 564-residue protein sequence, read N- to C-terminus: Centrosomal protein kizuna (564 aa).

The tract at residues 1 to 21 (MSEAGRAAAGPCPEVSPSRSQ) is disordered. Residues 28–50 (RCLRDSETRRLELERKLMEYKSS) are a coiled coil. Disordered regions lie at residues 178 to 201 (QPAA…PTQA), 304 to 345 (TGPQ…EDEP), 442 to 465 (ECGD…PNDS), 487 to 519 (IGNN…RPEF), and 531 to 564 (AFWG…DFYD). The span at 313-324 (QQAASQDSSSSS) shows a compositional bias: low complexity. Residues 447–463 (SSVQSNESSYSLPSIPN) show a composition bias toward polar residues. The span at 493–519 (EAKESQEMCSERSSSSERSGDLSRPEF) shows a compositional bias: basic and acidic residues.

Belongs to the kizuna family.

The protein resides in the cytoplasm. It is found in the cytoskeleton. Its subcellular location is the microtubule organizing center. The protein localises to the centrosome. It localises to the cilium basal body. Its function is as follows. Centrosomal protein required for establishing a robust mitotic centrosome architecture that can endure the forces that converge on the centrosomes during spindle formation. Required for stabilizing the expanded pericentriolar material around the centriole. This is Centrosomal protein kizuna (KIZ) from Gallus gallus (Chicken).